A 470-amino-acid polypeptide reads, in one-letter code: Putative bifunctional phosphatase/peptidyl-prolyl cis-trans isomerase (470 aa).

D22 acts as the Nucleophile in catalysis. Residues D22, D24, and D221 each coordinate Mg(2+). In terms of domain architecture, PPIase cyclophilin-type spans 286 to 468 (TGPKVTIKTN…EDVIIETIEV (183 aa)).

In the C-terminal section; belongs to the cyclophilin-type PPIase family. PPIL1 subfamily. Mg(2+) is required as a cofactor.

It catalyses the reaction [protein]-peptidylproline (omega=180) = [protein]-peptidylproline (omega=0). In terms of biological role, PPIases accelerate the folding of proteins. It catalyzes the cis-trans isomerization of proline imidic peptide bonds in oligopeptides. The sequence is that of Putative bifunctional phosphatase/peptidyl-prolyl cis-trans isomerase from Streptococcus pyogenes serotype M6 (strain ATCC BAA-946 / MGAS10394).